The following is a 192-amino-acid chain: Ribosomal RNA small subunit methyltransferase G (192 aa).

Residues Gly63, Phe68, 112 to 113 (IE), and Arg125 contribute to the S-adenosyl-L-methionine site.

This sequence belongs to the methyltransferase superfamily. RNA methyltransferase RsmG family.

It localises to the cytoplasm. It catalyses the reaction guanosine(527) in 16S rRNA + S-adenosyl-L-methionine = N(7)-methylguanosine(527) in 16S rRNA + S-adenosyl-L-homocysteine. In terms of biological role, specifically methylates the N7 position of guanine in position 527 of 16S rRNA. The protein is Ribosomal RNA small subunit methyltransferase G of Rickettsia felis (strain ATCC VR-1525 / URRWXCal2) (Rickettsia azadi).